Consider the following 153-residue polypeptide: MPQCALLLSLLGLLALSSACYIQNCPRGGKRALPETGIRQCMSCGPRDRGRCFGPNICCGEALGCLMGSPETARCAGENYLLTPCQAGGRPCGSEGGRCAVSGLCCNSESCAVDSDCLGETESLEPGDSSADSSPTELLLRLLHMSSRGQSEY.

The signal sequence occupies residues 1–19 (MPQCALLLSLLGLLALSSA). A disulfide bridge connects residues cysteine 20 and cysteine 25. At glycine 28 the chain carries Glycine amide. Cystine bridges form between cysteine 41–cysteine 85, cysteine 44–cysteine 58, cysteine 52–cysteine 75, cysteine 59–cysteine 65, cysteine 92–cysteine 105, cysteine 99–cysteine 117, and cysteine 106–cysteine 111.

This sequence belongs to the vasopressin/oxytocin family. Post-translationally, seven disulfide bonds are present in neurophysin.

The protein localises to the secreted. Its function is as follows. Vasotocin is probably an antidiuretic hormone. In Takifugu rubripes (Japanese pufferfish), this protein is Vasotocin-neurophysin VT 1.